We begin with the raw amino-acid sequence, 279 residues long: Borealin (279 aa).

Over residues 135-152 (KTKAKVAAKKPSTARKTR) the composition is skewed to basic residues. A disordered region spans residues 135 to 180 (KTKAKVAAKKPSTARKTRASTANLTNTSKRTSKRGRATPSASKQIE). Over residues 153–163 (ASTANLTNTSK) the composition is skewed to polar residues.

The protein belongs to the borealin family. Component of the CPC at least composed of survivin/birc5, incenp, cdca8/borealin and/or cdca9/dasra-A, and aurkb/aurora-B. Interacts with incenp (via N-terminus).

Its subcellular location is the nucleus. It is found in the chromosome. The protein resides in the centromere. The protein localises to the cytoplasm. It localises to the cytoskeleton. Its subcellular location is the spindle. In terms of biological role, component of the chromosomal passenger complex (CPC), a complex that acts as a key regulator of mitosis. The CPC complex has essential functions at the centromere in ensuring correct chromosome alignment and segregation and is required for chromatin-induced microtubule stabilization and spindle assembly. Contributes to CPC function by facilitating loading of the CPC onto chromosomes. This chain is Borealin (cdca8), found in Xenopus tropicalis (Western clawed frog).